We begin with the raw amino-acid sequence, 259 residues long: Hydroxyethylthiazole kinase (259 aa).

Methionine 38 contacts substrate. The ATP site is built by arginine 113 and serine 158. Glycine 185 provides a ligand contact to substrate.

Belongs to the Thz kinase family. The cofactor is Mg(2+).

The catalysed reaction is 5-(2-hydroxyethyl)-4-methylthiazole + ATP = 4-methyl-5-(2-phosphooxyethyl)-thiazole + ADP + H(+). It functions in the pathway cofactor biosynthesis; thiamine diphosphate biosynthesis; 4-methyl-5-(2-phosphoethyl)-thiazole from 5-(2-hydroxyethyl)-4-methylthiazole: step 1/1. Catalyzes the phosphorylation of the hydroxyl group of 4-methyl-5-beta-hydroxyethylthiazole (THZ). In Leuconostoc citreum (strain KM20), this protein is Hydroxyethylthiazole kinase.